Here is a 199-residue protein sequence, read N- to C-terminus: Protein-L-isoaspartate O-methyltransferase (199 aa).

S51 is an active-site residue.

This sequence belongs to the methyltransferase superfamily. L-isoaspartyl/D-aspartyl protein methyltransferase family.

The protein localises to the cytoplasm. It catalyses the reaction [protein]-L-isoaspartate + S-adenosyl-L-methionine = [protein]-L-isoaspartate alpha-methyl ester + S-adenosyl-L-homocysteine. Its function is as follows. Catalyzes the methyl esterification of L-isoaspartyl residues in peptides and proteins that result from spontaneous decomposition of normal L-aspartyl and L-asparaginyl residues. It plays a role in the repair and/or degradation of damaged proteins. This chain is Protein-L-isoaspartate O-methyltransferase, found in Fervidobacterium nodosum (strain ATCC 35602 / DSM 5306 / Rt17-B1).